The primary structure comprises 1199 residues: DNA polymerase beta (1199 aa).

The protein belongs to the DNA polymerase type-B family.

It catalyses the reaction DNA(n) + a 2'-deoxyribonucleoside 5'-triphosphate = DNA(n+1) + diphosphate. Functionally, DNA-directed DNA polymerase involved in viral DNA replication. The polypeptide is DNA polymerase beta (Ornithodoros (relapsing fever ticks)).